The sequence spans 246 residues: UDP-N-acetyl-D-mannosaminuronic acid transferase (246 aa).

It belongs to the glycosyltransferase 26 family.

The enzyme catalyses UDP-N-acetyl-alpha-D-mannosaminouronate + N-acetyl-alpha-D-glucosaminyl-di-trans,octa-cis-undecaprenyl diphosphate = beta-D-ManNAcA-(1-&gt;4)-alpha-D-GlcNAc-di-trans,octa-cis-undecaprenyl diphosphate + UDP + H(+). It participates in bacterial outer membrane biogenesis; enterobacterial common antigen biosynthesis. Functionally, catalyzes the synthesis of Und-PP-GlcNAc-ManNAcA (Lipid II), the second lipid-linked intermediate involved in enterobacterial common antigen (ECA) synthesis. This is UDP-N-acetyl-D-mannosaminuronic acid transferase from Escherichia coli O157:H7.